A 400-amino-acid chain; its full sequence is MSKKSVAQLSAADLEGKRVLVRVDFNVPVDEKGVITDETRIRAALPTIQDLISKGAKVILVSHFGRPKGVDEKLRLTPVAQRLSELLHKPVAKLDDCIGDAVIAHTQAMANGDVCLLENVRFHPGEEKNDPEFAKQLAACAEVYVNDAFGTAHRAHASTAGVTQYLSPCVAGFLMEKELEYLQNAIEHPRRPLAAIVGGSKVSSKIGVIEALLEKVDKLLIGGGMIFTFYKARGLNVGKSLVEEDKLELAKHLETKAQEKGVELLLPTDVVVADNFANDANSQVVSIEAIPDDWMGLDIGPASVKRFQEALQDCKTVIWNGPMGVFEFDQFAKGTEAIARYLAELTSQGVCTIIGGGDSVAAVEKVGVADRMSHISTGGGASLELLEGKQLPGIAALDDA.

Substrate-binding positions include 24–26 (DFN), Arg-40, 63–66 (HFGR), Arg-121, and Arg-154. ATP-binding positions include Lys-205, Gly-296, Glu-327, and 356–359 (GGDS).

This sequence belongs to the phosphoglycerate kinase family. Monomer.

It is found in the cytoplasm. It catalyses the reaction (2R)-3-phosphoglycerate + ATP = (2R)-3-phospho-glyceroyl phosphate + ADP. Its pathway is carbohydrate degradation; glycolysis; pyruvate from D-glyceraldehyde 3-phosphate: step 2/5. This Thermosynechococcus vestitus (strain NIES-2133 / IAM M-273 / BP-1) protein is Phosphoglycerate kinase.